The following is a 198-amino-acid chain: Probable GTP-binding protein EngB (198 aa).

The 175-residue stretch at 21–195 (NFSEVAFLGR…EDIIINQTLG (175 aa)) folds into the EngB-type G domain. Residues 29 to 36 (GRSNVGKS), 56 to 60 (GKTQL), 81 to 84 (DLPG), 151 to 154 (TKCD), and 174 to 176 (VSN) each bind GTP. Mg(2+)-binding residues include Ser36 and Thr58.

This sequence belongs to the TRAFAC class TrmE-Era-EngA-EngB-Septin-like GTPase superfamily. EngB GTPase family. Mg(2+) is required as a cofactor.

Its function is as follows. Necessary for normal cell division and for the maintenance of normal septation. This Campylobacter jejuni subsp. jejuni serotype O:23/36 (strain 81-176) protein is Probable GTP-binding protein EngB.